The chain runs to 122 residues: Small ribosomal subunit protein uS13 (122 aa).

Positions 97–122 (PVRGQKTKSNARTRKGPRPSRIKKKK) are disordered. The segment covering 101 to 122 (QKTKSNARTRKGPRPSRIKKKK) has biased composition (basic residues).

The protein belongs to the universal ribosomal protein uS13 family. Part of the 30S ribosomal subunit. Forms a loose heterodimer with protein S19. Forms two bridges to the 50S subunit in the 70S ribosome.

Its function is as follows. Located at the top of the head of the 30S subunit, it contacts several helices of the 16S rRNA. In the 70S ribosome it contacts the 23S rRNA (bridge B1a) and protein L5 of the 50S subunit (bridge B1b), connecting the 2 subunits; these bridges are implicated in subunit movement. Contacts the tRNAs in the A and P-sites. This chain is Small ribosomal subunit protein uS13, found in Thermosipho melanesiensis (strain DSM 12029 / CIP 104789 / BI429).